The chain runs to 40 residues: Large ribosomal subunit protein bL36 (40 aa).

This sequence belongs to the bacterial ribosomal protein bL36 family.

This is Large ribosomal subunit protein bL36 from Corynebacterium kroppenstedtii (strain DSM 44385 / JCM 11950 / CIP 105744 / CCUG 35717).